A 118-amino-acid polypeptide reads, in one-letter code: MNFRALFAATVAALVGSTSATTCTTTQQTAAYVALVSILSDTSFNQCSTDSGYSMLTATSLPTTEQYKLMCASTACKTMINKIVTLNPPDCELTVPTSGLVLNVFTYANGFSSTCASL.

A signal peptide spans 1–20; it reads MNFRALFAATVAALVGSTSA. Disulfide bonds link cysteine 23/cysteine 91, cysteine 47/cysteine 76, and cysteine 71/cysteine 115.

Belongs to the elicitin family.

The protein localises to the secreted. Its function is as follows. Induces local and distal defense responses (incompatible hypersensitive reaction) in plants from the solanaceae and cruciferae families. Elicits leaf necrosis and causes the accumulation of pathogenesis-related proteins. Might interact with the lipidic molecules of the plasma membrane. This Phytophthora nicotianae (Potato buckeye rot agent) protein is Elicitin (PARA1).